Here is a 1317-residue protein sequence, read N- to C-terminus: MLDVNFFDELRIGLATADDIRQWSYGEVKKPETINYRTLKPEKDGLFCEKIFGPTRDWECYCGKYKRVRFKGIICERCGVEVTRAKVRRERMGHIELAAPVTHIWYFKGVPSRLGYLLDLAPKDLEKIIYFAAYVITSVDEELRHNELSTLEAEMEVEKKAVADQRDADLEARAQKLEADLAELEAEGAKSDVRRKVKDGGEREMRQIRDRAQRELDRLDEIWNTFTKLAPKQLIVDEVLYRELTDRYGEYFTGAMGAESIQKLMENFDIDAEAESLRETIRTGKGQKKLRALKRLKVVAAFQANGNSPMGMVLDAVPVIPPELRPMVQLDGGRFATSDLNDLYRRVINRNNRLKRLIDLGAPEIIVNNEKRMLQESVDALFDNGRRGRPVTGPGNRPLKSLSDLLKGKQGRFRQNLLGKRVDYSGRSVIVVGPQLKLHQCGLPKLMALELFKPFVMKRLVDLNHAQNIKSAKRMVERQRPQVWDVLEEVIAEHPVLLNRAPTLHRLGIQAFEPQLVEGKAIQLHPLVCEAFNADFDGDQMAVHLPLSAEAQAEARILMLSSNNILSPASGRPLAMPRLDMVTGLYYLTRLEEGAKGEYRPATADAPEFGVYSSPAEAQMAVDRGELTVRSKIKVRLTDQRPPKDVEAELFPEGWQRGDAWTTETTLGRVLFNELLPADYPFINEPMPKKRQATIINDLAERYPMIVVAQTVDKLKDAGFYWATRSGVTVSMSDVLVPPEKAEIMERYEAQSDQIEKKYQRGALDHQERNNALVKIWQEATEEVGKALRAHYPADNPIITIVDSGATGNFTQTRTLAGMKGLVTNPKGEFIPRPIKSSFREGLTVLEYFINTHGARKGLADTALRTADSGYLTRRLVDVSQDVIVREHDCGTERGIVVPIAEKQPDGSIIRDPHVETSTYARTLAADAVDANGNVIVAKGADLGDPALEALLEAGITEVKVRSVLTCTTGTGVCATCYGRSMATGKLVDIGEAVGIVAAQSIGEPGTQLTMRTFHQGGVAGDDITGGLPRVQELFEARVPKGKAPIAEVSGRVRLEDDDRFYKITIIPDDGGEEVVYDKLSKRQRLRVFKHDDGTERLLSDGDHVEVGQQLLEGAADPHEVLRVMGPRQVQVHLVHEVQEVYRSQGVSIHDKHIEVIVRQMLRRVTIIDSGSTEFLPGSLTERAEFEAANRRVVAEGGEPASGRPVLMGITKASLATDSWLSAASFQETTRVLTDAAINCRSDKLIGLKENVIIGKLIPAGTGINRYRNIQVQPTEEARAAAYAVPSYDDTYYSPDSFGSSTGAAVPLDDYGFSDYR.

Cys60, Cys62, Cys75, and Cys78 together coordinate Zn(2+). 3 residues coordinate Mg(2+): Asp535, Asp537, and Asp539. Residues Cys890, Cys967, Cys974, and Cys977 each coordinate Zn(2+).

The protein belongs to the RNA polymerase beta' chain family. As to quaternary structure, the RNAP catalytic core consists of 2 alpha, 1 beta, 1 beta' and 1 omega subunit. When a sigma factor is associated with the core the holoenzyme is formed, which can initiate transcription. It depends on Mg(2+) as a cofactor. Requires Zn(2+) as cofactor.

It catalyses the reaction RNA(n) + a ribonucleoside 5'-triphosphate = RNA(n+1) + diphosphate. Its function is as follows. DNA-dependent RNA polymerase catalyzes the transcription of DNA into RNA using the four ribonucleoside triphosphates as substrates. In Nocardia farcinica (strain IFM 10152), this protein is DNA-directed RNA polymerase subunit beta'.